The chain runs to 251 residues: Pyruvate formate-lyase-activating enzyme (251 aa).

Positions 15-244 (VDGPGLRYIL…KAAYRYVNFK (230 aa)) constitute a Radical SAM core domain. 3 residues coordinate [4Fe-4S] cluster: Cys29, Cys33, and Cys36. S-adenosyl-L-methionine contacts are provided by residues 35–37 (YCH), Gly79, 134–136 (DIK), and His207.

The protein belongs to the organic radical-activating enzymes family. [4Fe-4S] cluster is required as a cofactor.

It localises to the cytoplasm. It carries out the reaction glycyl-[formate C-acetyltransferase] + reduced [flavodoxin] + S-adenosyl-L-methionine = glycin-2-yl radical-[formate C-acetyltransferase] + semiquinone [flavodoxin] + 5'-deoxyadenosine + L-methionine + H(+). In terms of biological role, activation of pyruvate formate-lyase under anaerobic conditions by generation of an organic free radical, using S-adenosylmethionine and reduced flavodoxin as cosubstrates to produce 5'-deoxy-adenosine. In Staphylococcus aureus (strain N315), this protein is Pyruvate formate-lyase-activating enzyme (pflA).